Consider the following 288-residue polypeptide: Light-independent protochlorophyllide reductase iron-sulfur ATP-binding protein (288 aa).

Residues 10–15 (GIGKST) and lysine 39 each bind ATP. Serine 14 provides a ligand contact to Mg(2+). Positions 95 and 129 each coordinate [4Fe-4S] cluster. 180–181 (NR) provides a ligand contact to ATP.

The protein belongs to the NifH/BchL/ChlL family. As to quaternary structure, homodimer. Protochlorophyllide reductase is composed of three subunits; ChlL, ChlN and ChlB. [4Fe-4S] cluster is required as a cofactor.

It catalyses the reaction chlorophyllide a + oxidized 2[4Fe-4S]-[ferredoxin] + 2 ADP + 2 phosphate = protochlorophyllide a + reduced 2[4Fe-4S]-[ferredoxin] + 2 ATP + 2 H2O. It participates in porphyrin-containing compound metabolism; chlorophyll biosynthesis (light-independent). Functionally, component of the dark-operative protochlorophyllide reductase (DPOR) that uses Mg-ATP and reduced ferredoxin to reduce ring D of protochlorophyllide (Pchlide) to form chlorophyllide a (Chlide). This reaction is light-independent. The L component serves as a unique electron donor to the NB-component of the complex, and binds Mg-ATP. This Nostoc punctiforme (strain ATCC 29133 / PCC 73102) protein is Light-independent protochlorophyllide reductase iron-sulfur ATP-binding protein.